Consider the following 447-residue polypeptide: MQESQETHISNHLDEVVAAVSITHRKKFQNKLLQTALFQPPREKLHLCEEKAKSYSNSHEYKQAVHELVRCVALTRICYGDSHWKLAEAHVNLAQGYLQLKGLSLQAKQHAEKARQILANSIVPPYSENTDVFKFSIELFHTMGRALLSLQKFKEAAENLTKAERLSKELLQCGRIIKEEWIEIEARIRLSFAQVYQGQKKSKEALSHYQAALEYVEISKGETSRECVPILRELAGVEQALGLHDVSINHFLQAHLIILSRSPSQVEAADSAHIVAHAAVASGRHEHHDVAEQYFQESMAHLKDSEGMGRTKFLSIQDEFCHFLQMTGQKERATSILRESLEAKVEAFGDFSPEVAETYRLLGGADLAQGNHSGARKKLKKCLQIQTLLYGPQDKRTLATQQAMGMLSTAPKVASKPRQASKAKVAFCTSIPQDTLLGKARPGTTAD.

TPR repeat units follow at residues 45–78, 137–170, 186–219, and 356–389; these read LHLC…TRIC, IELF…SKEL, ARIR…VEIS, and AETY…QTLL.

In terms of assembly, found Associated with the EvC complex composed of EFCAB7, IQCE, EVC2 and EVC.

The protein resides in the cell projection. It is found in the cilium. Functionally, participates positively in the ciliary Hedgehog (Hh) signaling. This is Tetratricopeptide repeat protein 23 (TTC23) from Homo sapiens (Human).